A 511-amino-acid polypeptide reads, in one-letter code: Cytochrome P450 77A2 (511 aa).

C456 serves as a coordination point for heme.

This sequence belongs to the cytochrome P450 family. It depends on heme as a cofactor.

The protein is Cytochrome P450 77A2 (CYP77A2) of Solanum melongena (Eggplant).